We begin with the raw amino-acid sequence, 503 residues long: Probable cytosol aminopeptidase (503 aa).

The Mn(2+) site is built by Lys-270 and Asp-275. Lys-282 is a catalytic residue. The Mn(2+) site is built by Asp-293, Asp-352, and Glu-354. Arg-356 is an active-site residue.

Belongs to the peptidase M17 family. Requires Mn(2+) as cofactor.

Its subcellular location is the cytoplasm. The enzyme catalyses Release of an N-terminal amino acid, Xaa-|-Yaa-, in which Xaa is preferably Leu, but may be other amino acids including Pro although not Arg or Lys, and Yaa may be Pro. Amino acid amides and methyl esters are also readily hydrolyzed, but rates on arylamides are exceedingly low.. The catalysed reaction is Release of an N-terminal amino acid, preferentially leucine, but not glutamic or aspartic acids.. Its function is as follows. Presumably involved in the processing and regular turnover of intracellular proteins. Catalyzes the removal of unsubstituted N-terminal amino acids from various peptides. This chain is Probable cytosol aminopeptidase, found in Pectobacterium atrosepticum (strain SCRI 1043 / ATCC BAA-672) (Erwinia carotovora subsp. atroseptica).